The sequence spans 744 residues: Tripartite motif-containing protein 2 (744 aa).

At S10 the chain carries Phosphoserine. The segment at 23-64 adopts an RING-type zinc-finger fold; it reads CSICLERYKNPKVLPCLHTFCERCLQNYIPAHSLTLSCPVCR. The segment at 113–154 adopts a B box-type zinc-finger fold; it reads GKPLSCPNHDGNVMEFYCQSCETAMCRECTEGEHAEHPTVPL. Residues C118, H121, C141, and H146 each coordinate Zn(2+). Residues 320–421 form a Filamin repeat; it reads TTNAVASETV…IRGSPFKLKV (102 aa). The residue at position 371 (T371) is a Phosphothreonine. A phosphoserine mark is found at S375, S424, and S428. Residues 432 to 462 form a disordered region; that stretch reads EGVKRRVKSPGSGHVKQKAVKRPASMYSTGK. NHL repeat units lie at residues 473-516, 520-563, 564-605, 609-652, 656-699, and 700-743; these read IFRV…FSND, KSRF…FSND, GKFK…FQPN, VTRF…FNQE, MLKF…FDGS, and GSFL…YRYL.

Belongs to the TRIM/RBCC family. As to quaternary structure, forms homooligomers. Interacts with TRIM3; this interaction reduces TRIM2 activity. Interacts with myosin V; myosin V may not be a substrate for ubiquitination. Interacts with NEFL. Interacts with phosphorylated BCL2L11. Interacts with SIRPA. Post-translationally, RING-type zinc finger-dependent and UBE2D1-dependent autoubiquitination. As to expression, highly expressed in the cerebellum, hippocampus, retina and spinal cord. In the cerebellum, strongest expression in Purkinje cells and in the deep cerebellar nuclei. In retina, high expression in the ganglionic cell layer, inner nuclear layer and inthe outer plexiform layer. Particularly high expression in the hippocampus, in pyramidal cells of CA1-CA3 hippocampal areas and ingranule cells of the dentate gyrus.

The protein resides in the cytoplasm. The enzyme catalyses S-ubiquitinyl-[E2 ubiquitin-conjugating enzyme]-L-cysteine + [acceptor protein]-L-lysine = [E2 ubiquitin-conjugating enzyme]-L-cysteine + N(6)-ubiquitinyl-[acceptor protein]-L-lysine.. Its pathway is protein modification; protein ubiquitination. UBE2D1-dependent E3 ubiquitin-protein ligase that mediates the ubiquitination of NEFL and of phosphorylated BCL2L11. Plays a neuroprotective function. May play a role in neuronal rapid ischemic tolerance. Plays a role in antiviral immunity and limits new world arenavirus infection independently of its ubiquitin ligase activity by decreasing virus internalization. In Mus musculus (Mouse), this protein is Tripartite motif-containing protein 2 (Trim2).